A 425-amino-acid polypeptide reads, in one-letter code: Interferon-activable protein 211 (425 aa).

A Pyrin domain is found at 1 to 88; sequence MVNEYKRIVL…AEILKKERSE (88 aa). Over residues 86 to 99 the composition is skewed to basic and acidic residues; it reads RSEVTGETSLEKNG. Positions 86–223 are disordered; that stretch reads RSEVTGETSL…QNQNIPRGAV (138 aa). Positions 122 to 153 are enriched in low complexity; the sequence is TSATQEETSTAQAGTSTAQAGTSTAQAGTSTA. A run of 4 repeats spans residues 129–135, 136–142, 143–149, and 150–156. A 4 X 7 AA tandem repeats of T-S-T-A-Q-A-[GR] region spans residues 129–177; the sequence is TSTAQAGTSTAQAGTSTAQAGTSTAQKRKSMREEETGVKKSKAAKEPDQ. Basic and acidic residues predominate over residues 159–176; sequence MREEETGVKKSKAAKEPD. Residues 190–206 are compositionally biased toward low complexity; the sequence is SPILHSSSSASSNILSA. Polar residues predominate over residues 207–218; sequence KNQKSQPQNQNI. The HIN-200 domain maps to 213–413; sequence PQNQNIPRGA…CGDHSFVKVT (201 aa).

This sequence belongs to the HIN-200 family. Interacts with HOXB2. In terms of tissue distribution, mononuclear phagocytes.

The protein localises to the nucleus. Its function is as follows. Inhibits cell growth via p53/TP53 and RB1-dependent and independent pathways. May work in synergy with TP53 to promote the transcription of CDKN1A/P21. This Mus musculus (Mouse) protein is Interferon-activable protein 211.